A 765-amino-acid polypeptide reads, in one-letter code: Alpha,alpha-trehalose phosphorylase (765 aa).

Substrate is bound at residue 352–353; the sequence is WD. E479 (proton donor) is an active-site residue. 591–592 serves as a coordination point for substrate; it reads KQ.

It belongs to the glycosyl hydrolase 65 family. As to quaternary structure, homodimer.

It catalyses the reaction alpha,alpha-trehalose + phosphate = beta-D-glucose 1-phosphate + D-glucose. It functions in the pathway glycan degradation; trehalose degradation. Catalyzes the reversible phosphorolytic cleavage of trehalose. Phosphorolysis is specific for trehalose. The protein is Alpha,alpha-trehalose phosphorylase (treP) of Geobacillus stearothermophilus (Bacillus stearothermophilus).